The primary structure comprises 223 residues: Ribonuclease 3 (223 aa).

Residues 5 to 127 (LQRLEKKIGY…IIGAIYLDSD (123 aa)) enclose the RNase III domain. Glutamate 40 serves as a coordination point for Mg(2+). Aspartate 44 is a catalytic residue. Positions 113 and 116 each coordinate Mg(2+). Glutamate 116 is an active-site residue. The region spanning 154–223 (DPKTRLQEYL…AADIALGQLN (70 aa)) is the DRBM domain.

It belongs to the ribonuclease III family. Homodimer. Mg(2+) is required as a cofactor.

The protein localises to the cytoplasm. The enzyme catalyses Endonucleolytic cleavage to 5'-phosphomonoester.. Functionally, digests double-stranded RNA. Involved in the processing of primary rRNA transcript to yield the immediate precursors to the large and small rRNAs (23S and 16S). Processes some mRNAs, and tRNAs when they are encoded in the rRNA operon. Processes pre-crRNA and tracrRNA of type II CRISPR loci if present in the organism. This chain is Ribonuclease 3, found in Aliivibrio fischeri (strain ATCC 700601 / ES114) (Vibrio fischeri).